The sequence spans 256 residues: Putative transposase for insertion sequence element IS112 (256 aa).

The protein belongs to the transposase 11 family.

Involved in the transposition of the insertion sequence IS112 which inactivates the SalI restriction-modification system. The polypeptide is Putative transposase for insertion sequence element IS112 (Streptomyces albus G).